The chain runs to 586 residues: Zinc finger protein Eos (586 aa).

2 disordered regions span residues 1 to 42 and 68 to 98; these read MHTP…APDF and EKEF…SANS. Residues 25–34 show a composition bias toward basic and acidic residues; that stretch reads QGKDNLEREL. Positions 79 to 98 are enriched in polar residues; it reads SVSTPNSQHSSPSRSLSANS. Residue lysine 100 forms a Glycyl lysine isopeptide (Lys-Gly) (interchain with G-Cter in SUMO2) linkage. Position 105 is a phosphoserine (serine 105). C2H2-type zinc fingers lie at residues 159 to 181, 187 to 209, 215 to 237, and 248 to 271; these read LKCD…KRSH, FHCN…IKLH, FKCP…LRTH, and YKCN…ERCH. The segment at 281 to 586 is interaction with FOXP3; it reads AQALTGQPGD…HIVRGEHKVG (306 aa). At lysine 335 the chain carries N6-acetyllysine. The tract at residues 413 to 490 is disordered; it reads RLELPGSREA…QPPPTIVVGR (78 aa). A CTBP-binding motif PEDLG motif is present at residues 423–433; sequence GEGPEDLGDGG. Pro residues predominate over residues 476-485; sequence QGPPPQPPPT. Lysine 501 is covalently cross-linked (Glycyl lysine isopeptide (Lys-Gly) (interchain with G-Cter in SUMO2)). 2 consecutive C2H2-type zinc fingers follow at residues 531–553 and 559–583; these read FKCE…MGCH and FECN…RGEH.

The protein belongs to the Ikaros C2H2-type zinc-finger protein family. In terms of assembly, self-associates. Interacts with other family members; IKZF1, IKZF2, IKZF3 and IKZF5. Interacts with CTBP2, SPI1 and MITF. Interacts with FOXP3 and CTBP1. In terms of tissue distribution, expressed mainly in the brain. Up-regulated in long term cultured astrocytes. Down-regulated during osteoclast differentiation.

It is found in the nucleus. DNA-binding protein that binds to the 5'GGGAATRCC-3' Ikaros-binding sequence. Interacts with SPI1 and MITF to repress transcription of the CTSK and ACP5 promoters via recruitment of corepressors SIN3A and CTBP2. May be involved in the development of central and peripheral nervous systems. Essential for the inhibitory function of regulatory T-cells (Treg). Mediates FOXP3-mediated gene silencing in regulatory T-cells (Treg) via recruitment of corepressor CTBP1. This Mus musculus (Mouse) protein is Zinc finger protein Eos (Ikzf4).